The chain runs to 283 residues: Large ribosomal subunit protein mL46 (283 aa).

At K217 the chain carries N6-succinyllysine. K228 carries the post-translational modification N6-acetyllysine. At K246 the chain carries N6-succinyllysine.

It belongs to the mitochondrion-specific ribosomal protein mL46 family. Component of the mitochondrial ribosome large subunit (39S) which comprises a 16S rRNA and about 50 distinct proteins.

It is found in the mitochondrion. The protein is Large ribosomal subunit protein mL46 (Mrpl46) of Mus musculus (Mouse).